Consider the following 251-residue polypeptide: Small ribosomal subunit protein uS2 (251 aa).

Positions 232 to 251 (EAIAEMDEQVEEDAEEASND) are disordered.

It belongs to the universal ribosomal protein uS2 family.

This chain is Small ribosomal subunit protein uS2, found in Chlorobaculum parvum (strain DSM 263 / NCIMB 8327) (Chlorobium vibrioforme subsp. thiosulfatophilum).